The sequence spans 357 residues: Dihydroorotate dehydrogenase (quinone) (357 aa).

FMN-binding positions include 66–70 and T90; that span reads AGFDK. K70 serves as a coordination point for substrate. 115–119 is a substrate binding site; that stretch reads NRMGF. Positions 143 and 176 each coordinate FMN. Residue N176 coordinates substrate. S179 acts as the Nucleophile in catalysis. N181 is a substrate binding site. FMN-binding residues include K212 and T240. 241–242 is a binding site for substrate; it reads NT. FMN-binding positions include G264, G293, and 314-315; that span reads YT.

The protein belongs to the dihydroorotate dehydrogenase family. Type 2 subfamily. In terms of assembly, monomer. Requires FMN as cofactor.

Its subcellular location is the cell membrane. It catalyses the reaction (S)-dihydroorotate + a quinone = orotate + a quinol. It participates in pyrimidine metabolism; UMP biosynthesis via de novo pathway; orotate from (S)-dihydroorotate (quinone route): step 1/1. Its function is as follows. Catalyzes the conversion of dihydroorotate to orotate with quinone as electron acceptor. This is Dihydroorotate dehydrogenase (quinone) from Mycobacterium bovis (strain BCG / Pasteur 1173P2).